We begin with the raw amino-acid sequence, 66 residues long: UPF0370 protein CKO_00315 (66 aa).

A helical transmembrane segment spans residues 4–24 (LAKYWWILVLVFLVGVLINVI). The interval 39 to 66 (KPELPPHRDFNDKWDDDDDWPKKDQPKK) is disordered. The segment covering 42–51 (LPPHRDFNDK) has biased composition (basic and acidic residues).

The protein belongs to the UPF0370 family.

The protein resides in the cell membrane. In Citrobacter koseri (strain ATCC BAA-895 / CDC 4225-83 / SGSC4696), this protein is UPF0370 protein CKO_00315.